We begin with the raw amino-acid sequence, 267 residues long: 7alpha-hydroxysteroid dehydrogenase (267 aa).

NADP(+) contacts are provided by residues 13-18 (SATRGI), R38, 63-64 (DA), and N90. Residues S145 and Y158 each contribute to the cholate site. Residues Y158, K162, and 191 to 195 (IATDA) each bind NADP(+). The active-site Proton acceptor is the Y158.

This sequence belongs to the short-chain dehydrogenases/reductases (SDR) family. Homotetramer.

It catalyses the reaction cholate + NADP(+) = 3alpha,12alpha-dihydroxy-7-oxo-5beta-cholanate + NADPH + H(+). The enzyme catalyses chenodeoxycholate + NADP(+) = 7-oxolithocholate + NADPH + H(+). Functionally, 7alpha-hydroxysteroid dehydrogenase that catalyzes the NADP(+)-dependent oxidation of the 7alpha-hydroxy group of 7alpha-hydroxysteroids, such as the major human bile acids cholate and chenodeoxycholate, to the corresponding 7-oxosteroids. Is thus liley involved in the metabolism of primary bile acids. The protein is 7alpha-hydroxysteroid dehydrogenase of Paraclostridium sordellii (Clostridium sordellii).